We begin with the raw amino-acid sequence, 327 residues long: Phenylalanine--tRNA ligase alpha subunit (327 aa).

Residue glutamate 252 coordinates Mg(2+).

The protein belongs to the class-II aminoacyl-tRNA synthetase family. Phe-tRNA synthetase alpha subunit type 1 subfamily. As to quaternary structure, tetramer of two alpha and two beta subunits. Mg(2+) is required as a cofactor.

It localises to the cytoplasm. It catalyses the reaction tRNA(Phe) + L-phenylalanine + ATP = L-phenylalanyl-tRNA(Phe) + AMP + diphosphate + H(+). The polypeptide is Phenylalanine--tRNA ligase alpha subunit (Shigella dysenteriae serotype 1 (strain Sd197)).